Here is a 581-residue protein sequence, read N- to C-terminus: Invertase (581 aa).

Positions 1–22 (MFLKYILASGICLVSLLSSTNA) are cleaved as a signal peptide. Residues Asn37, Asn40, Asn46, Asn57, Asn62, and Asn79 are each glycosylated (N-linked (GlcNAc...) asparagine). Substrate-binding positions include 94–97 (FMND), Gln113, and 158–159 (FS). Residue Asp97 is part of the active site. Residues Asn168 and Asn175 are each glycosylated (N-linked (GlcNAc...) asparagine). Substrate contacts are provided by residues 227-228 (RD) and Glu280. Asn322 carries an N-linked (GlcNAc...) asparagine glycan. Trp366 contributes to the substrate binding site. 7 N-linked (GlcNAc...) asparagine glycosylation sites follow: Asn399, Asn409, Asn425, Asn446, Asn452, Asn519, and Asn569.

This sequence belongs to the glycosyl hydrolase 32 family. In terms of processing, glycosylated; contains 67% carbohydrates. This is composed of equimolar amounts of mannose and galactose. There is also a small amount of glucosamine present.

It catalyses the reaction Hydrolysis of terminal non-reducing beta-D-fructofuranoside residues in beta-D-fructofuranosides.. The protein is Invertase (inv1) of Schizosaccharomyces pombe (strain 972 / ATCC 24843) (Fission yeast).